The primary structure comprises 78 residues: MATQVPTKVPQDPDPFYYDYDTVQTVGMTLATILFLLGILIILSKKVKCRKADSRSESPTCKSCKSELPSSAPGGGGV.

At 1–22 the chain is on the extracellular side; sequence MATQVPTKVPQDPDPFYYDYDT. Thr3 and Thr7 each carry an O-linked (GlcNAc) threonine glycan. Residues 23–43 form a helical membrane-spanning segment; that stretch reads VQTVGMTLATILFLLGILIIL. Over 44–78 the chain is Cytoplasmic; that stretch reads SKKVKCRKADSRSESPTCKSCKSELPSSAPGGGGV. The disordered stretch occupies residues 52-78; it reads ADSRSESPTCKSCKSELPSSAPGGGGV. A Phosphoserine modification is found at Ser71.

The protein belongs to the FXYD family. Regulatory subunit of the sodium/potassium-transporting ATPase which is composed of a catalytic alpha subunit, a non-catalytic beta subunit and an additional regulatory subunit. The regulatory subunit, a member of the FXYD protein family, modulates the enzymatic activity in a tissue- and isoform-specific way by changing affinities of the Na+/K+-ATPase toward Na(+), K(+) or ATP. In terms of processing, O-glycosylated; required for stabilization and translocation to the plasma membrane.

Its subcellular location is the cell membrane. Functionally, associates with and regulates the activity of the sodium/potassium-transporting ATPase (NKA) which catalyzes the hydrolysis of ATP coupled with the exchange of Na(+) and K(+) ions across the plasma membrane. Reduces the apparent affinity for external K(+), an effect that depends on the presence of external Na(+) and voltage. Increases the apparent affinity for intracellular Na(+). This chain is FXYD domain-containing ion transport regulator 7 (FXYD7), found in Bos taurus (Bovine).